A 187-amino-acid chain; its full sequence is Orotate phosphoribosyltransferase (187 aa).

Residues Arg103, Lys104, Lys107, and Glu129–Ser137 contribute to the 5-phospho-alpha-D-ribose 1-diphosphate site. Residues Thr133 and Arg161 each coordinate orotate.

Belongs to the purine/pyrimidine phosphoribosyltransferase family. PyrE subfamily. In terms of assembly, homodimer. The cofactor is Mg(2+).

It catalyses the reaction orotidine 5'-phosphate + diphosphate = orotate + 5-phospho-alpha-D-ribose 1-diphosphate. Its pathway is pyrimidine metabolism; UMP biosynthesis via de novo pathway; UMP from orotate: step 1/2. Its function is as follows. Catalyzes the transfer of a ribosyl phosphate group from 5-phosphoribose 1-diphosphate to orotate, leading to the formation of orotidine monophosphate (OMP). This is Orotate phosphoribosyltransferase from Methanosarcina mazei (strain ATCC BAA-159 / DSM 3647 / Goe1 / Go1 / JCM 11833 / OCM 88) (Methanosarcina frisia).